A 1292-amino-acid polypeptide reads, in one-letter code: Kinesin-like protein KIN-12A (1292 aa).

The disordered stretch occupies residues 1 to 86; the sequence is MKKHFTLPRN…LSAETATESG (86 aa). Residues 19-29 show a composition bias toward low complexity; the sequence is PHSPNPSISKS. Residues 62–71 show a composition bias toward pro residues; it reads PLPPRPPPSN. The Kinesin motor domain maps to 91–426; sequence GVKVIVRMKP…LRFAQRAKAI (336 aa). ATP is bound at residue 165–172; it reads GQTGSGKT. Microtubules-binding stretches follow at residues 293–297, 326–332, and 375–379; these read SSRSH, VDLAGSE, and HIPYR. Positions 424 to 461 are neck; sequence KAIQNKAVVNEVMQDDVNFLRGVIHQLRDELQRMKNDG. Positions 677-724 are disordered; that stretch reads SVSPTIRNSRKSLKTSELSTASQKDSEGENLVTEAADPSPATSKKMNN. Coiled coils occupy residues 945 to 992 and 1047 to 1232; these read EVLK…CYID and SEEL…NQLV.

Belongs to the TRAFAC class myosin-kinesin ATPase superfamily. Kinesin family. KIN-12 subfamily. Homodimer and heterodimer with KIN12B. Interacts with TIO.

Its subcellular location is the cytoplasm. The protein resides in the cytoskeleton. It localises to the phragmoplast. Its function is as follows. Plus-end directed kinesin-like motor enzyme that plays a critical role in the organization of phragmoplast microtubules during cytokinesis. Constitutes a signaling module in association with serine/threonine-protein kinase TIO that is required to support phragmoplast expansion and cell-plate growth in plant cells. Binds microtubules in an ATP-sensitive manner. This Arabidopsis thaliana (Mouse-ear cress) protein is Kinesin-like protein KIN-12A.